Here is a 473-residue protein sequence, read N- to C-terminus: Glutamate--tRNA ligase (473 aa).

Residues 11-21 (PSPTGFLHIGG) carry the 'HIGH' region motif. Positions 240–244 (KLSKR) match the 'KMSKS' region motif. Lys-243 is a binding site for ATP.

The protein belongs to the class-I aminoacyl-tRNA synthetase family. Glutamate--tRNA ligase type 1 subfamily. In terms of assembly, monomer.

It is found in the cytoplasm. It carries out the reaction tRNA(Glu) + L-glutamate + ATP = L-glutamyl-tRNA(Glu) + AMP + diphosphate. In terms of biological role, catalyzes the attachment of glutamate to tRNA(Glu) in a two-step reaction: glutamate is first activated by ATP to form Glu-AMP and then transferred to the acceptor end of tRNA(Glu). In Rhodopseudomonas palustris (strain BisB5), this protein is Glutamate--tRNA ligase.